Consider the following 551-residue polypeptide: UvrABC system protein C (551 aa).

The region spanning 12–87 is the GIY-YIG domain; that stretch reads EKPGVYIFKN…IFKHKPKYNI (76 aa). The UVR domain occupies 193 to 228; that stretch reads EFVKDYIEQKMNYHSKMLDFENAAKYRDLLLSFEKL.

This sequence belongs to the UvrC family. Interacts with UvrB in an incision complex.

The protein resides in the cytoplasm. Its function is as follows. The UvrABC repair system catalyzes the recognition and processing of DNA lesions. UvrC both incises the 5' and 3' sides of the lesion. The N-terminal half is responsible for the 3' incision and the C-terminal half is responsible for the 5' incision. The polypeptide is UvrABC system protein C (Thermosipho africanus (strain TCF52B)).